A 210-amino-acid polypeptide reads, in one-letter code: Riboflavin kinase (210 aa).

An H-T-H motif-like region spans residues 1 to 81 (MECKERRLIG…DLLRYFNIAS (81 aa)). The riboflavin kinase stretch occupies residues 82 to 210 (IRLIGRVISG…GDIVEVEILL (129 aa)). 91–96 (GLGEGA) lines the CDP pocket. Mg(2+) is bound by residues Thr-120 and Asn-122. 2 residues coordinate FMN: Thr-177 and Glu-185. 190–193 (VKLR) serves as a coordination point for CDP.

The protein belongs to the archaeal riboflavin kinase family. The cofactor is Mg(2+).

It catalyses the reaction riboflavin + CTP = CDP + FMN + H(+). Its pathway is cofactor biosynthesis; FMN biosynthesis; FMN from riboflavin (CTP route): step 1/1. Functionally, catalyzes the CTP-dependent phosphorylation of riboflavin (vitamin B2) to form flavin mononucleotide (FMN). The sequence is that of Riboflavin kinase (ribK) from Pyrobaculum aerophilum (strain ATCC 51768 / DSM 7523 / JCM 9630 / CIP 104966 / NBRC 100827 / IM2).